A 280-amino-acid chain; its full sequence is 4-diphosphocytidyl-2-C-methyl-D-erythritol kinase (280 aa).

Residue Lys-8 is part of the active site. 91–101 (PVAAGLAGGST) is an ATP binding site. Residue Asp-133 is part of the active site.

The protein belongs to the GHMP kinase family. IspE subfamily.

It catalyses the reaction 4-CDP-2-C-methyl-D-erythritol + ATP = 4-CDP-2-C-methyl-D-erythritol 2-phosphate + ADP + H(+). It functions in the pathway isoprenoid biosynthesis; isopentenyl diphosphate biosynthesis via DXP pathway; isopentenyl diphosphate from 1-deoxy-D-xylulose 5-phosphate: step 3/6. Its function is as follows. Catalyzes the phosphorylation of the position 2 hydroxy group of 4-diphosphocytidyl-2C-methyl-D-erythritol. This Clostridium botulinum (strain ATCC 19397 / Type A) protein is 4-diphosphocytidyl-2-C-methyl-D-erythritol kinase.